The sequence spans 555 residues: Glypican-6 (555 aa).

A signal peptide spans 1–23 (MPSWIGAVILPLLGLLLSLPAGA). The segment covering 348 to 357 (PALRSARSAP) has biased composition (low complexity). Disordered stretches follow at residues 348 to 376 (PALRSARSAPENFNTRFRPYNPEERPTTA) and 480 to 501 (GNDVNFQDTSDESSGSGSGSGC). Ser529 is lipidated: GPI-anchor amidated serine. A propeptide spans 530–555 (SAAQRGHSLLSWSLTCIVLALQRLCR) (removed in mature form).

It belongs to the glypican family. In terms of tissue distribution, widely expressed. High expression in fetal kidney and lung and lower expressions in fetal liver and brain. In adult tissues, very abundant in ovary, high levels also observed in liver, kidney, small intestine and colon. Not detected in peripheral blood leukocytes. Detected in breast cancer cells (at protein level).

It is found in the cell membrane. Its subcellular location is the secreted. The protein localises to the extracellular space. Cell surface proteoglycan that bears heparan sulfate. Putative cell surface coreceptor for growth factors, extracellular matrix proteins, proteases and anti-proteases. Enhances migration and invasion of cancer cells through WNT5A signaling. In Homo sapiens (Human), this protein is Glypican-6 (GPC6).